The primary structure comprises 263 residues: Undecaprenyl-diphosphatase (263 aa).

7 helical membrane passes run 38-58 (RSDF…CLAL), 75-95 (RDYV…GLIV), 108-128 (PVAW…HFAG), 135-155 (VVTW…GVFP), 181-201 (FVFM…LLEM), 217-237 (VAFI…LGYI), and 242-262 (FTVF…WLPA).

The protein belongs to the UppP family.

Its subcellular location is the cell inner membrane. It carries out the reaction di-trans,octa-cis-undecaprenyl diphosphate + H2O = di-trans,octa-cis-undecaprenyl phosphate + phosphate + H(+). Functionally, catalyzes the dephosphorylation of undecaprenyl diphosphate (UPP). Confers resistance to bacitracin. The polypeptide is Undecaprenyl-diphosphatase (Xanthomonas campestris pv. campestris (strain 8004)).